Consider the following 363-residue polypeptide: MSKNYHIAVLPGDGIGPEVMAQALKVMDAVRSRFDMRITTSRYDVGGIAIDNHGHPLPKATVEGCEQADAILFGSVGGPKWENLPPESQPERGALLPLRKHFKLFSNLRPAKLYQGLEAFCPLRADIAANGFDILCVRELTGGIYFGQPKGREGSGQYEKAFDTEVYHRFEIERIARIAFESARKRRRKVTSIDKANVLQSSILWREIVNDVAKAYPDVELAHMYIDNATMQLIKDPSQFDVLLCSNLFGDILSDECAMITGSMGMLPSASLNEQEFGLYEPAGGSAPDIAGKNIANPIAQILSLALLLRYSLDADEAATAIEQAINRALEEGVRTSDLARGAAAVSTDEMGDIIARYVAEGV.

Residue 78–91 (GPKWENLPPESQPE) participates in NAD(+) binding. Arg99, Arg109, Arg138, and Asp227 together coordinate substrate. Mg(2+) is bound by residues Asp227, Asp251, and Asp255. 285–297 (GSAPDIAGKNIAN) contributes to the NAD(+) binding site.

The protein belongs to the isocitrate and isopropylmalate dehydrogenases family. LeuB type 1 subfamily. In terms of assembly, homodimer. Mg(2+) serves as cofactor. Mn(2+) is required as a cofactor.

Its subcellular location is the cytoplasm. It catalyses the reaction (2R,3S)-3-isopropylmalate + NAD(+) = 4-methyl-2-oxopentanoate + CO2 + NADH. It participates in amino-acid biosynthesis; L-leucine biosynthesis; L-leucine from 3-methyl-2-oxobutanoate: step 3/4. Catalyzes the oxidation of 3-carboxy-2-hydroxy-4-methylpentanoate (3-isopropylmalate) to 3-carboxy-4-methyl-2-oxopentanoate. The product decarboxylates to 4-methyl-2 oxopentanoate. The polypeptide is 3-isopropylmalate dehydrogenase (Salmonella typhi).